The chain runs to 487 residues: 3-octaprenyl-4-hydroxybenzoate carboxy-lyase (487 aa).

Asparagine 172 lines the Mn(2+) pocket. Residues 175-177 (IYR), 189-191 (RWL), and 194-195 (RG) each bind prenylated FMN. Glutamate 238 lines the Mn(2+) pocket. Residue aspartate 287 is the Proton donor of the active site.

The protein belongs to the UbiD family. In terms of assembly, homohexamer. Prenylated FMN is required as a cofactor. The cofactor is Mn(2+).

Its subcellular location is the cell membrane. It catalyses the reaction a 4-hydroxy-3-(all-trans-polyprenyl)benzoate + H(+) = a 2-(all-trans-polyprenyl)phenol + CO2. It functions in the pathway cofactor biosynthesis; ubiquinone biosynthesis. In terms of biological role, catalyzes the decarboxylation of 3-octaprenyl-4-hydroxy benzoate to 2-octaprenylphenol, an intermediate step in ubiquinone biosynthesis. This chain is 3-octaprenyl-4-hydroxybenzoate carboxy-lyase, found in Nitrosomonas europaea (strain ATCC 19718 / CIP 103999 / KCTC 2705 / NBRC 14298).